A 212-amino-acid chain; its full sequence is LexA repressor (212 aa).

The segment at residues 29–49 is a DNA-binding region (H-T-H motif); that stretch reads VREIGEAVGLSSSSTIHGHIE. Active-site for autocatalytic cleavage activity residues include Ser-133 and Lys-171.

The protein belongs to the peptidase S24 family. In terms of assembly, homodimer.

It catalyses the reaction Hydrolysis of Ala-|-Gly bond in repressor LexA.. Its function is as follows. Represses a number of genes involved in the response to DNA damage (SOS response), including recA and lexA. In the presence of single-stranded DNA, RecA interacts with LexA causing an autocatalytic cleavage which disrupts the DNA-binding part of LexA, leading to derepression of the SOS regulon and eventually DNA repair. This Leuconostoc mesenteroides subsp. mesenteroides (strain ATCC 8293 / DSM 20343 / BCRC 11652 / CCM 1803 / JCM 6124 / NCDO 523 / NBRC 100496 / NCIMB 8023 / NCTC 12954 / NRRL B-1118 / 37Y) protein is LexA repressor.